The sequence spans 496 residues: NADP-dependent glyceraldehyde-3-phosphate dehydrogenase (496 aa).

Substrate is bound by residues Arg-116 and 169-170; that span reads NY. NADP(+)-binding residues include Lys-192, Thr-195, and Asp-230. 245 to 249 is a binding site for NAD(+); it reads GGDTG. Catalysis depends on Glu-264, which acts as the Proton acceptor. 297–299 contributes to the substrate binding site; it reads RCT. Cys-298 (nucleophile) is an active-site residue. Glu-391 is an NADP(+) binding site. Residue Arg-451 coordinates substrate.

It belongs to the aldehyde dehydrogenase family.

It is found in the cytoplasm. It carries out the reaction D-glyceraldehyde 3-phosphate + NADP(+) + H2O = (2R)-3-phosphoglycerate + NADPH + 2 H(+). Its function is as follows. Important as a means of generating NADPH for biosynthetic reactions. In Nicotiana plumbaginifolia (Leadwort-leaved tobacco), this protein is NADP-dependent glyceraldehyde-3-phosphate dehydrogenase (GAPN).